The sequence spans 895 residues: Microsomal triglyceride transfer protein large subunit (895 aa).

A signal peptide spans 1–18 (MILLAVLFLCFFSSYSAS). Positions 28-659 (LNNERLYKLT…VFQYLGKAGL (632 aa)) constitute a Vitellogenin domain. Cysteine 174 and cysteine 194 form a disulfide bridge.

Heterodimer; heterodimerizes with the protein disulfide isomerase (P4HB/PDI). Interacts with APOB. Interacts with PRAP1.

The protein localises to the endoplasmic reticulum. It is found in the golgi apparatus. It catalyses the reaction a 1,2-diacyl-sn-glycero-3-phosphocholine(in) = a 1,2-diacyl-sn-glycero-3-phosphocholine(out). It carries out the reaction a 1,2-diacyl-sn-glycero-3-phosphoethanolamine(in) = a 1,2-diacyl-sn-glycero-3-phosphoethanolamine(out). The enzyme catalyses a cholesterol ester(in) = a cholesterol ester(out). The catalysed reaction is a triacyl-sn-glycerol(in) = a triacyl-sn-glycerol(out). Its function is as follows. Catalyzes the transport of triglyceride, cholesteryl ester, and phospholipid between phospholipid surfaces. Required for the assembly and secretion of plasma lipoproteins that contain apolipoprotein B. May be involved in regulating cholesteryl ester biosynthesis in cells that produce lipoproteins. This Mesocricetus auratus (Golden hamster) protein is Microsomal triglyceride transfer protein large subunit (MTTP).